A 309-amino-acid chain; its full sequence is UDP-N-acetylenolpyruvoylglucosamine reductase (309 aa).

Residues 34-198 enclose the FAD-binding PCMH-type domain; that stretch reads RVGGPAEVMF…VRARLHARPG (165 aa). The active site involves Arg-178. Ser-227 (proton donor) is an active-site residue. Residue Glu-297 is part of the active site.

It belongs to the MurB family. FAD is required as a cofactor.

Its subcellular location is the cytoplasm. The enzyme catalyses UDP-N-acetyl-alpha-D-muramate + NADP(+) = UDP-N-acetyl-3-O-(1-carboxyvinyl)-alpha-D-glucosamine + NADPH + H(+). It functions in the pathway cell wall biogenesis; peptidoglycan biosynthesis. In terms of biological role, cell wall formation. The chain is UDP-N-acetylenolpyruvoylglucosamine reductase from Acidiphilium cryptum (strain JF-5).